Consider the following 363-residue polypeptide: Phosrestin-2 (363 aa).

The protein belongs to the arrestin family.

The sequence is that of Phosrestin-2 (ARR1) from Calliphora vicina (Blue blowfly).